The following is a 354-amino-acid chain: Protein RecA (354 aa).

75–82 contacts ATP; it reads GPESSGKT.

This sequence belongs to the RecA family.

The protein localises to the cytoplasm. Can catalyze the hydrolysis of ATP in the presence of single-stranded DNA, the ATP-dependent uptake of single-stranded DNA by duplex DNA, and the ATP-dependent hybridization of homologous single-stranded DNAs. It interacts with LexA causing its activation and leading to its autocatalytic cleavage. This Cupriavidus taiwanensis (strain DSM 17343 / BCRC 17206 / CCUG 44338 / CIP 107171 / LMG 19424 / R1) (Ralstonia taiwanensis (strain LMG 19424)) protein is Protein RecA.